Here is a 113-residue protein sequence, read N- to C-terminus: Large ribosomal subunit protein uL22 (113 aa).

Belongs to the universal ribosomal protein uL22 family. In terms of assembly, part of the 50S ribosomal subunit.

This protein binds specifically to 23S rRNA; its binding is stimulated by other ribosomal proteins, e.g. L4, L17, and L20. It is important during the early stages of 50S assembly. It makes multiple contacts with different domains of the 23S rRNA in the assembled 50S subunit and ribosome. Its function is as follows. The globular domain of the protein is located near the polypeptide exit tunnel on the outside of the subunit, while an extended beta-hairpin is found that lines the wall of the exit tunnel in the center of the 70S ribosome. The sequence is that of Large ribosomal subunit protein uL22 from Bacillus thuringiensis subsp. konkukian (strain 97-27).